We begin with the raw amino-acid sequence, 263 residues long: 3-methyl-2-oxobutanoate hydroxymethyltransferase (263 aa).

Residues D45 and D84 each contribute to the Mg(2+) site. 3-methyl-2-oxobutanoate-binding positions include D45–S46, D84, and K113. Position 115 (E115) interacts with Mg(2+). E182 functions as the Proton acceptor in the catalytic mechanism.

It belongs to the PanB family. In terms of assembly, homodecamer; pentamer of dimers. It depends on Mg(2+) as a cofactor.

The protein resides in the cytoplasm. The enzyme catalyses 3-methyl-2-oxobutanoate + (6R)-5,10-methylene-5,6,7,8-tetrahydrofolate + H2O = 2-dehydropantoate + (6S)-5,6,7,8-tetrahydrofolate. The protein operates within cofactor biosynthesis; coenzyme A biosynthesis. Catalyzes the reversible reaction in which hydroxymethyl group from 5,10-methylenetetrahydrofolate is transferred onto alpha-ketoisovalerate to form ketopantoate. The sequence is that of 3-methyl-2-oxobutanoate hydroxymethyltransferase from Ignicoccus hospitalis (strain KIN4/I / DSM 18386 / JCM 14125).